A 760-amino-acid chain; its full sequence is Leucine-rich repeat extensin-like protein 3 (760 aa).

An N-terminal signal peptide occupies residues 1–20 (MKKTIQILLFFFFLINLTNA). Residue Asn-16 is glycosylated (N-linked (GlcNAc...) asparagine). One copy of the LRR 1 repeat lies at 21–45 (LSISSDGGVLSDNEVRHIQRRQLLE). Residues Asn-86 and Asn-98 are each glycosylated (N-linked (GlcNAc...) asparagine). LRR repeat units lie at residues 113 to 137 (IRTV…LGLL), 138 to 160 (SDLA…RFNR), 161 to 185 (LKLL…VLQL), 186 to 209 (PSLK…LFSK), 211 to 232 (LDAI…FGDS), 234 to 255 (VSVI…LVEM), 256 to 279 (KNLN…IGRL), 281 to 303 (NVTV…VGEM), and 304 to 327 (VSVE…ICQL). A glycan (N-linked (GlcNAc...) asparagine) is linked at Asn-281. Asn-332 carries an N-linked (GlcNAc...) asparagine glycan. 3 disordered regions span residues 389 to 502 (GRSV…PPPP), 515 to 610 (PPVY…YSPP), and 663 to 748 (PPPP…PVIG). Pro residues-rich tracts occupy residues 394-415 (PRPP…PPAP) and 423-502 (LTSP…PPPP). The contains the Ser-Pro(4) repeats stretch occupies residues 409-758 (SPPPPAPIFS…VSYASPPPPP (350 aa)). The segment covering 663-745 (PPPPVHYSSP…SPEYEGPLPP (83 aa)) has biased composition (pro residues).

As to quaternary structure, interacts with SH3P1. Hydroxylated on proline residues in the S-P-P-P-P repeat. In terms of processing, O-glycosylated on hydroxyprolines. Expressed in roots, stems, leaves and flowers, mostly in vascular tissues.

Its subcellular location is the secreted. The protein localises to the cell wall. Modulates cell morphogenesis by regulating cell wall formation and assembly, and/or growth polarization. The sequence is that of Leucine-rich repeat extensin-like protein 3 (LRX3) from Arabidopsis thaliana (Mouse-ear cress).